The following is a 72-amino-acid chain: Small, acid-soluble spore protein C (72 aa).

The protein belongs to the alpha/beta-type SASP family.

SASP are bound to spore DNA. They are double-stranded DNA-binding proteins that cause DNA to change to an a-like conformation. They protect the DNA backbone from chemical and enzymatic cleavage and are thus involved in dormant spore's high resistance to UV light. The chain is Small, acid-soluble spore protein C (sspC) from Bacillus subtilis (strain 168).